The chain runs to 1169 residues: Phospholipid-transporting ATPase IF (1169 aa).

Residues 1–47 (LGFDPPHQSDTRTIYIANRFPQNGLYTPQKFIDNRIISSKYTVWNFV) are Cytoplasmic-facing. The helical transmembrane segment at 48 to 69 (PKNLFEQFRRVANFYFLIIFLV) threads the bilayer. Residues 70 to 74 (QLMID) lie on the Extracellular side of the membrane. Residues 75–96 (TPTSPITSGLPLFFVITVTAIK) traverse the membrane as a helical segment. Over 97–281 (QGYEDWLRHN…SAVEKSMNTF (185 aa)) the chain is Cytoplasmic. Residues 282–303 (LIIYLIILISEAIISTILKYTW) form a helical membrane-spanning segment. Residues 304-333 (QAEEKWDEPWYNQKTEHQRNSSKILRFISD) lie on the Extracellular side of the membrane. Residues 334–351 (FLAFLVLYNFIIPISLYV) form a helical membrane-spanning segment. The Cytoplasmic portion of the chain corresponds to 352 to 868 (TVEMQKFLGS…HGHFYYIRIA (517 aa)). D399 functions as the 4-aspartylphosphate intermediate in the catalytic mechanism. ATP-binding residues include D399, K400, T401, E523, F564, K587, R618, T698, G699, D700, R786, and K792. D399 is a Mg(2+) binding site. T401 is a Mg(2+) binding site. Residues 794–802 (KVIRLIKIS) form a required for binding to the RING-finger of HLTF region. Residue D813 participates in Mg(2+) binding. ATP-binding residues include N816 and D817. Residue D817 participates in Mg(2+) binding. A helical transmembrane segment spans residues 869-890 (TLVQYFFYKNVCFITPQFLYQF). Over 891-902 (YCLFSQQTLYDS) the chain is Extracellular. A helical transmembrane segment spans residues 903-922 (VYLTLYNICFTSLPILIYSL). Topologically, residues 923–952 (LEQHIDPHILQNKPTLYRDISKNRLLSIKT) are cytoplasmic. Residues 953 to 974 (FLYWTILGFSRSFIFLFGSYFL) form a helical membrane-spanning segment. Over 975 to 989 (IGKDASLLGNGQMFG) the chain is Extracellular. A helical transmembrane segment spans residues 990-1012 (NWTFGTLVFTVMVITVTVKMALE). Residues 1013–1017 (THFWT) are Cytoplasmic-facing. A helical membrane pass occupies residues 1018-1039 (WINHLVTWGSIIFYFVFSLFYG). At 1040 to 1057 (GILWPFLGSQNMYFVFIQ) the chain is on the extracellular side. A helical membrane pass occupies residues 1058-1082 (LVSSGSAWFAIILMVVTCLFLDVMK). The Cytoplasmic portion of the chain corresponds to 1083 to 1169 (KVFDRQLHPT…TLSTMDSSTC (87 aa)). Residue S1146 is modified to Phosphoserine.

The protein belongs to the cation transport ATPase (P-type) (TC 3.A.3) family. Type IV subfamily. As to quaternary structure, component of a P4-ATPase flippase complex which consists of a catalytic alpha subunit ATP11B and an accessory beta subunit TMEM30A. In terms of assembly, interacts with HLTF (via the RING-finger). Mg(2+) is required as a cofactor. Ubiquitously expressed.

The protein localises to the recycling endosome membrane. The protein resides in the early endosome. Its subcellular location is the endoplasmic reticulum. It localises to the golgi apparatus. It is found in the trans-Golgi network. The protein localises to the nucleus inner membrane. It catalyses the reaction ATP + H2O + phospholipidSide 1 = ADP + phosphate + phospholipidSide 2.. It carries out the reaction a 1,2-diacyl-sn-glycero-3-phospho-L-serine(out) + ATP + H2O = a 1,2-diacyl-sn-glycero-3-phospho-L-serine(in) + ADP + phosphate + H(+). The catalysed reaction is a 1,2-diacyl-sn-glycero-3-phosphoethanolamine(out) + ATP + H2O = a 1,2-diacyl-sn-glycero-3-phosphoethanolamine(in) + ADP + phosphate + H(+). Functionally, catalytic component of a P4-ATPase flippase complex which catalyzes the hydrolysis of ATP coupled to the transport of aminophospholipids, phosphatidylserines (PS) and phosphatidylethanolamines (PE), from the outer to the inner leaflet of intracellular membranes. May contribute to the maintenance of membrane lipid asymmetry in endosome compartment. Appears to play a role in the subnuclear trafficking of transcription factors with RING motifs. The chain is Phospholipid-transporting ATPase IF (ATP11B) from Oryctolagus cuniculus (Rabbit).